Here is an 824-residue protein sequence, read N- to C-terminus: C-Jun-amino-terminal kinase-interacting protein 2 (824 aa).

Disordered regions lie at residues 1 to 28 (MADR…QDIS), 40 to 160 (ITDD…GFDL), 172 to 349 (CSPA…DSPW), and 361 to 501 (EGSS…APRD). Over residues 77-110 (DFQEFEMIDDNEEEDDEDEEEEEEEEEGDGEGQE) the composition is skewed to acidic residues. The tract at residues 110 to 275 (EGGDPGSEAP…RMISSISETE (166 aa)) is JNK-binding domain (JBD). Polar residues predominate over residues 141–156 (LRLTTLGAQDSLNNNG). The tract at residues 239–498 (GRGGRRSSQE…PGGRGTGPSA (260 aa)) is necessary for interaction with FGF13. Phosphoserine occurs at positions 254, 302, and 305. Low complexity predominate over residues 268-305 (ISSISETELELSSDGGSSSSGRSSHLTNSIEEASSPAS). Residues 327-346 (TNSEYESGSESEPDLSEDAD) show a composition bias toward acidic residues. Residues 416-432 (APPPPAPAAPRPGPAQP) are compositionally biased toward pro residues. A compositionally biased stretch (low complexity) spans 451-467 (AAPGRAARPGRACSAAC). Positions 468–484 (SEEEDEEDDEEEEDAED) are enriched in acidic residues. The region spanning 604–665 (EREQTHRAVF…PAFYAHAVPG (62 aa)) is the SH3 domain. The 137-residue stretch at 677 to 813 (PCWVERFDVQ…FLEYYQEHLA (137 aa)) folds into the PID domain.

Belongs to the JIP scaffold family. In terms of assembly, forms homo- or heterooligomeric complexes. Binds specific components of the JNK signaling pathway namely JNK1, JNK2, JNK3, MAP2K7, MAP3K10, MAP3K11, MAP3K12 and MAPK13. Also binds the proline-rich domain-containing splice variant of apolipoprotein E receptor 2 (ApoER2). Binds the cytoplasmic tails of LRP1 and LRP2 (Megalin). Binds the TPR motif-containing C-terminal of kinesin light chain, Klc1, pre-assembled MAPK8IP1 scaffolding complexes are then transported as a cargo of kinesin, to the required subcellular location. Interacts with the cytoplasmic domain of APP. Interacts with DCLK2. Interacts with TIAM1 and TIAM2. Interacts with FGF13; enables the interaction with MAPK13 and may regulate the MAPK8IP2 scaffolding activity. Interacts with SH3RF2. Expressed mainly in the brain and pancreas, including insulin-secreting cells. In the nervous system, more abundantly expressed in the cerebellum, pituitary gland, occipital lobe and the amygdala. Also expressed in fetal brain. Very low levels found in uterus, ovary, prostate, colon, testis, adrenal gland, thyroid gland and salivary gland.

Its subcellular location is the cytoplasm. Functionally, the JNK-interacting protein (JIP) group of scaffold proteins selectively mediates JNK signaling by aggregating specific components of the MAPK cascade to form a functional JNK signaling module. JIP2 inhibits IL1 beta-induced apoptosis in insulin-secreting cells. May function as a regulator of vesicle transport, through interactions with the JNK-signaling components and motor proteins. This chain is C-Jun-amino-terminal kinase-interacting protein 2 (MAPK8IP2), found in Homo sapiens (Human).